Consider the following 467-residue polypeptide: Probable rhamnogalacturonase A (467 aa).

An N-terminal signal peptide occupies residues M1–A19. C40 and C66 are joined by a disulfide. The active-site Proton donor is the D217. C219 and C236 are joined by a disulfide. 2 N-linked (GlcNAc...) asparagine glycosylation sites follow: N237 and N252. Residue H292 is part of the active site. N319 carries an N-linked (GlcNAc...) asparagine glycan. 2 disulfide bridges follow: C342–C348 and C370–C379.

The protein belongs to the glycosyl hydrolase 28 family.

Its subcellular location is the secreted. It carries out the reaction Endohydrolysis of alpha-D-GalA-(1-&gt;2)-alpha-L-Rha glycosidic bond in the rhamnogalacturonan I backbone with initial inversion of anomeric configuration releasing oligosaccharides with beta-D-GalA at the reducing end.. Functionally, pectinolytic enzymes consist of four classes of enzymes: pectine lyase, polygalacturonase, pectin methylesterase and rhamnogalacturonase. Hydrolyzes alpha-D-galacturonopyranosyl-(1,2)-alpha-L-rhamnopyranosyl linkages in the backbone of the hairy regions of pectins. This Aspergillus oryzae (strain ATCC 42149 / RIB 40) (Yellow koji mold) protein is Probable rhamnogalacturonase A (rhgA).